Consider the following 223-residue polypeptide: MSSAALSGIGMTSQRTRERMLRRLSEKGIKDEVVLAALGAIPRHIFVDEALSSRAYEDGSLPIGFGQTISQPYIVARMTEILRNGGPLGKVLEIGTGCGYQTAVLSKVSKEVYSVERIRPLLMKARGHLRELRLANIKLKHADGTMGLPELAPFDGIMVTAAARHIPQELLEQLAVGGRMVIPVGTEEQILYLVEHLKTASGSEYRQSKLEAVKFVPLLGGTN.

Serine 70 is an active-site residue.

Belongs to the methyltransferase superfamily. L-isoaspartyl/D-aspartyl protein methyltransferase family.

Its subcellular location is the cytoplasm. It catalyses the reaction [protein]-L-isoaspartate + S-adenosyl-L-methionine = [protein]-L-isoaspartate alpha-methyl ester + S-adenosyl-L-homocysteine. Its function is as follows. Catalyzes the methyl esterification of L-isoaspartyl residues in peptides and proteins that result from spontaneous decomposition of normal L-aspartyl and L-asparaginyl residues. It plays a role in the repair and/or degradation of damaged proteins. The protein is Protein-L-isoaspartate O-methyltransferase of Methylobacillus flagellatus (strain ATCC 51484 / DSM 6875 / VKM B-1610 / KT).